The primary structure comprises 362 residues: Cobalt-precorrin-5B C(1)-methyltransferase (362 aa).

Belongs to the CbiD family.

It catalyses the reaction Co-precorrin-5B + S-adenosyl-L-methionine = Co-precorrin-6A + S-adenosyl-L-homocysteine. The protein operates within cofactor biosynthesis; adenosylcobalamin biosynthesis; cob(II)yrinate a,c-diamide from sirohydrochlorin (anaerobic route): step 6/10. In terms of biological role, catalyzes the methylation of C-1 in cobalt-precorrin-5B to form cobalt-precorrin-6A. This Geotalea daltonii (strain DSM 22248 / JCM 15807 / FRC-32) (Geobacter daltonii) protein is Cobalt-precorrin-5B C(1)-methyltransferase.